Reading from the N-terminus, the 101-residue chain is Large ribosomal subunit protein uL23 (101 aa).

It belongs to the universal ribosomal protein uL23 family. As to quaternary structure, part of the 50S ribosomal subunit. Contacts protein L29, and trigger factor when it is bound to the ribosome.

In terms of biological role, one of the early assembly proteins it binds 23S rRNA. One of the proteins that surrounds the polypeptide exit tunnel on the outside of the ribosome. Forms the main docking site for trigger factor binding to the ribosome. The protein is Large ribosomal subunit protein uL23 of Histophilus somni (strain 129Pt) (Haemophilus somnus).